The sequence spans 270 residues: MAVITKIEVQKRSKERFNIYIDKGQGEEYGFSVNEVILIKHGLQKGLEIDEIALGNILYNEEVQKAYLQAISYLSYQMRTKLEIEDFLRKKEVGQAIISEVVSKLLHDRYINDKEYAILYTRTQSNVNRKGPTVIKRELLNKGVQDLIIMHSLQEYTKEKQIENALILIEKKKKSYQKHSFLQMKLKLDEMLVRKGYSRDVIQICLEELKDEKDDEKQQEALHYHGNKYYEKYKKYDGWTFENKMKQALYRKGFSIDEIEIFLQMKREEG.

Belongs to the RecX family.

Its subcellular location is the cytoplasm. Its function is as follows. Modulates RecA activity. The chain is Regulatory protein RecX from Bacillus anthracis (strain A0248).